A 475-amino-acid polypeptide reads, in one-letter code: Pyruvate kinase (475 aa).

Position 36 (R36) interacts with substrate. Positions 38, 40, and 70 each coordinate K(+). Residue 38–41 (NFSH) coordinates ATP. R77 and K158 together coordinate ATP. E223 is a binding site for Mg(2+). 3 residues coordinate substrate: G246, D247, and T279. D247 provides a ligand contact to Mg(2+).

The protein belongs to the pyruvate kinase family. As to quaternary structure, homotetramer. A divalent metal cation is required as a cofactor.

It carries out the reaction pyruvate + ATP = phosphoenolpyruvate + ADP + H(+). The protein operates within carbohydrate degradation; glycolysis; pyruvate from D-glyceraldehyde 3-phosphate: step 5/5. This is Pyruvate kinase (pki) from Thermococcus litoralis (strain ATCC 51850 / DSM 5473 / JCM 8560 / NS-C).